A 535-amino-acid polypeptide reads, in one-letter code: Alpha-1,3-mannosyl-glycoprotein 4-beta-N-acetylglucosaminyltransferase A (535 aa).

At 1–6 (MRLRNG) the chain is on the cytoplasmic side. A helical; Signal-anchor for type II membrane protein membrane pass occupies residues 7-27 (TVATALVFVTSFLTLSWYTTW). The stretch at 28-63 (QNGKEKLIAYQREFLALKERLRVAEHRISQRSSELN) forms a coiled coil. Topologically, residues 28-535 (QNGKEKLIAY…NEIHIKKVTS (508 aa)) are lumenal. Residues N77 and N458 are each glycosylated (N-linked (GlcNAc...) asparagine). The residue at position 474 (S474) is a Phosphoserine.

The protein belongs to the glycosyltransferase 54 family. A divalent metal cation is required as a cofactor. In terms of processing, N-glycosylated.

It localises to the golgi apparatus membrane. It is found in the secreted. The catalysed reaction is N(4)-{beta-D-GlcNAc-(1-&gt;2)-alpha-D-Man-(1-&gt;3)-[beta-D-GlcNAc-(1-&gt;2)-alpha-D-Man-(1-&gt;6)]-beta-D-Man-(1-&gt;4)-beta-D-GlcNAc-(1-&gt;4)-beta-D-GlcNAc}-L-asparaginyl-[protein] + UDP-N-acetyl-alpha-D-glucosamine = N(4)-{beta-D-GlcNAc-(1-&gt;2)-[beta-D-GlcNAc-(1-&gt;4)]-alpha-D-Man-(1-&gt;3)-[beta-D-GlcNAc-(1-&gt;2)-alpha-D-Man-(1-&gt;6)]-beta-D-Man-(1-&gt;4)-beta-D-GlcNAc-(1-&gt;4)-beta-D-GlcNAc}-L-asparaginyl-[protein] + UDP + H(+). The enzyme catalyses an N(4)-{beta-D-GlcNAc-(1-&gt;2)-alpha-D-Man-(1-&gt;3)-[alpha-D-Man-(1-&gt;6)]-beta-D-Man-(1-&gt;4)-beta-D-GlcNAc-(1-&gt;4)-beta-D-GlcNAc}-L-asparaginyl-[protein] + UDP-N-acetyl-alpha-D-glucosamine = an N(4)-{beta-D-GlcNAc-(1-&gt;2)-[beta-D-GlcNAc-(1-&gt;4)]-alpha-D-Man-(1-&gt;3)-[alpha-D-Man-(1-&gt;6)]-beta-D-Man-(1-&gt;4)-beta-D-GlcNAc-(1-&gt;4)-beta-D-GlcNAc}-L-asparaginyl-[protein] + UDP + H(+). It carries out the reaction an N(4)-{beta-D-GlcNAc-(1-&gt;2)-alpha-D-Man-(1-&gt;3)-[beta-D-GlcNAc-(1-&gt;2)-[beta-D-GlcNAc-(1-&gt;6)]-alpha-D-Man-(1-&gt;6)]-beta-D-Man-(1-&gt;4)-beta-D-GlcNAc-(1-&gt;4)-beta-D-GlcNAc}-L-asparaginyl-[protein] + UDP-N-acetyl-alpha-D-glucosamine = an N(4)-{beta-D-GlcNAc-(1-&gt;2)-[beta-D-GlcNAc-(1-&gt;4)]-alpha-D-Man-(1-&gt;3)-[beta-D-GlcNAc-(1-&gt;2)-[beta-D-GlcNAc-(1-&gt;6)]-alpha-D-Man-(1-&gt;6)]-beta-D-Man-(1-&gt;4)-beta-D-GlcNAc-(1-&gt;4)-beta-D-GlcNAc}-L-asparaginyl-[protein] + UDP + H(+). It catalyses the reaction an N(4)-{beta-D-GlcNAc-(1-&gt;2)-alpha-D-Man-(1-&gt;3)-[beta-D-GlcNAc-(1-&gt;2)-alpha-D-Man-(1-&gt;6)]-beta-D-Man-(1-&gt;4)-beta-D-GlcNAc-(1-&gt;4)-[alpha-L-Fuc-(1-&gt;6)]-beta-D-GlcNAc}-L-asparaginyl-[protein] + UDP-N-acetyl-alpha-D-glucosamine = N(4)-{beta-D-GlcNAc-(1-&gt;2)-[beta-D-GlcNAc-(1-&gt;4)]-alpha-D-Man-(1-&gt;3)-[beta-D-GlcNAc-(1-&gt;2)-alpha-D-Man-(1-&gt;6)]-beta-D-Man-(1-&gt;4)-beta-D-GlcNAc-(1-&gt;4)-[alpha-L-Fuc-(1-&gt;6)]-beta-D-GlcNAc}-asparaginyl-[protein] + UDP + H(+). The catalysed reaction is an N(4)-{beta-D-GlcNAc-(1-&gt;2)-alpha-D-Man-(1-&gt;3)-[beta-D-Gal-(1-&gt;4)-beta-D-GlcNAc-(1-&gt;2)-alpha-D-Man-(1-&gt;6)]-beta-D-Man-(1-&gt;4)-beta-D-GlcNAc-(1-&gt;4)-beta-D-GlcNAc}-L-asparaginyl-[protein] + UDP-N-acetyl-alpha-D-glucosamine = an N(4)-{beta-D-GlcNAc-(1-&gt;2)-[beta-D-GlcNAc-(1-&gt;4)]-alpha-D-Man-(1-&gt;3)-[beta-D-Gal-(1-&gt;4)-beta-D-GlcNAc-(1-&gt;2)-alpha-D-Man-(1-&gt;6)]-beta-D-Man-(1-&gt;4)-beta-D-GlcNAc-(1-&gt;4)-beta-D-GlcNAc}-L-asparaginyl-[protein] + UDP + H(+). The enzyme catalyses N(4)-{beta-D-GlcNAc-(1-&gt;2)-alpha-D-Man-(1-&gt;3)-[alpha-D-Man-(1-&gt;3)-{alpha-D-Man-(1-&gt;6)}-alpha-D-Man-(1-&gt;6)]-beta-D-Man-(1-&gt;4)-beta-D-GlcNAc-(1-&gt;4)-beta-D-GlcNAc}-asparaginyl-[protein] + UDP-N-acetyl-alpha-D-glucosamine = N(4)-{beta-D-GlcNAc-(1-&gt;2)-[beta-D-GlcNAc-(1-&gt;4)]-alpha-D-Man-(1-&gt;3)-[alpha-D-Man-(1-&gt;3)-{alpha-D-Man-(1-&gt;6)}-alpha-D-Man-(1-&gt;6)]-beta-D-Man-(1-&gt;4)-beta-D-GlcNAc-(1-&gt;4)-beta-D-GlcNAc}-asparaginyl-[protein] + UDP + H(+). It carries out the reaction N(4)-{beta-D-GlcNAc-(1-&gt;2)-alpha-D-Man-(1-&gt;3)-beta-D-Man-(1-&gt;4)-beta-D-GlcNAc-(1-&gt;4)-beta-D-GlcNAc}-asparaginyl-[protein] + UDP-N-acetyl-alpha-D-glucosamine = N(4)-{beta-D-GlcNAc-(1-&gt;2)-[beta-D-GlcNAc-(1-&gt;4)]-alpha-D-Man-(1-&gt;3)-beta-D-Man-(1-&gt;4)-beta-D-GlcNAc-(1-&gt;4)-beta-D-GlcNAc}-asparaginyl-[protein] + UDP + H(+). It functions in the pathway protein modification; protein glycosylation. Inhibited by UDP. Its function is as follows. Glycosyltransferase that catalyze the transfer of GlcNAc from UDP-GlcNAc to the GlcNAcbeta1-2Manalpha1-3 arm of the core structure of N-linked glycans through a beta1-4 linkage and participates in the production of tri- and tetra-antennary N-linked sugar chains. Involved in glucose transport by mediating SLC2A2/GLUT2 glycosylation, thereby controlling cell-surface expression of SLC2A2 in pancreatic beta cells. The chain is Alpha-1,3-mannosyl-glycoprotein 4-beta-N-acetylglucosaminyltransferase A from Mus musculus (Mouse).